The sequence spans 134 residues: Protein YhfA (134 aa).

The polypeptide is Protein YhfA (yhfA) (Escherichia coli O157:H7).